The chain runs to 260 residues: Pyridoxine 5'-phosphate synthase (260 aa).

Residues asparagine 10 and arginine 21 each coordinate 3-amino-2-oxopropyl phosphate. Catalysis depends on histidine 46, which acts as the Proton acceptor. 1-deoxy-D-xylulose 5-phosphate is bound by residues arginine 48 and histidine 53. Residue glutamate 76 is the Proton acceptor of the active site. Threonine 113 contacts 1-deoxy-D-xylulose 5-phosphate. The active-site Proton donor is the histidine 204. Residues aspartate 205 and 227–228 (GH) contribute to the 3-amino-2-oxopropyl phosphate site.

The protein belongs to the PNP synthase family. In terms of assembly, homooctamer; tetramer of dimers.

It is found in the cytoplasm. It catalyses the reaction 3-amino-2-oxopropyl phosphate + 1-deoxy-D-xylulose 5-phosphate = pyridoxine 5'-phosphate + phosphate + 2 H2O + H(+). It functions in the pathway cofactor biosynthesis; pyridoxine 5'-phosphate biosynthesis; pyridoxine 5'-phosphate from D-erythrose 4-phosphate: step 5/5. Functionally, catalyzes the complicated ring closure reaction between the two acyclic compounds 1-deoxy-D-xylulose-5-phosphate (DXP) and 3-amino-2-oxopropyl phosphate (1-amino-acetone-3-phosphate or AAP) to form pyridoxine 5'-phosphate (PNP) and inorganic phosphate. This chain is Pyridoxine 5'-phosphate synthase, found in Xylella fastidiosa (strain M23).